A 559-amino-acid chain; its full sequence is Glucosylglycerate phosphorylase (559 aa).

Asp229 functions as the Nucleophile in the catalytic mechanism.

Belongs to the glycosyl hydrolase 13 family. Glucosylglycerate phosphorylase subfamily.

The enzyme catalyses (2R)-2-O-(alpha-D-glucopyranosyl)-glycerate + phosphate = (R)-glycerate + alpha-D-glucose 1-phosphate. Functionally, catalyzes the reversible phosphorolysis of glucosylglycerate into alpha-D-glucose 1-phosphate (Glc1P) and D-glycerate (also called (R)-glycerate). May be a regulator of intracellular levels of glucosylglycerate, a compatible solute that primarily protects organisms facing salt stress and very specific nutritional constraints. Cannot catalyze the phosphorolysis of sucrose. Does not act on other sugars such as alpha-D-galactose 1-phosphate, alpha-D-mannose 1-phosphate or beta-D-glucose 1-phosphate; in vitro D-erythronate can substitute for D-glycerate with a much lower efficiency. This Escherichia coli (strain K12) protein is Glucosylglycerate phosphorylase (ycjM).